The primary structure comprises 267 residues: Tryptophan synthase alpha chain (267 aa).

Catalysis depends on proton acceptor residues E51 and D62.

This sequence belongs to the TrpA family. As to quaternary structure, tetramer of two alpha and two beta chains.

It carries out the reaction (1S,2R)-1-C-(indol-3-yl)glycerol 3-phosphate + L-serine = D-glyceraldehyde 3-phosphate + L-tryptophan + H2O. The protein operates within amino-acid biosynthesis; L-tryptophan biosynthesis; L-tryptophan from chorismate: step 5/5. Its function is as follows. The alpha subunit is responsible for the aldol cleavage of indoleglycerol phosphate to indole and glyceraldehyde 3-phosphate. The polypeptide is Tryptophan synthase alpha chain (Prochlorococcus marinus (strain SARG / CCMP1375 / SS120)).